Here is a 207-residue protein sequence, read N- to C-terminus: MRLESVAKFHSPKSPMMSDSPRATASDSLSGTDVMAAMGMAQSQAGFGMAAFCGKHELSQNDKQKAINYLMQFAHKVSGKYCGVAKLEGNTKAKVLQVLATFAYADYCRSAATPGARCRNCHGTGRAVDIAKTEQWGRVVEKECGRCKGVGYSRMPASAAYRAVTMLIPNLTQPTWSRTVKPLYDALVVQCHKEESIADNILNAVTR.

Positions 1–28 (MRLESVAKFHSPKSPMMSDSPRATASDS) are disordered. Residues Cys-118, Cys-121, Cys-144, and Cys-147 each contribute to the Zn(2+) site. Residues 118 to 147 (CRNCHGTGRAVDIAKTEQWGRVVEKECGRC) fold into a zinc finger. The DNA-binding element occupies 171–192 (LTQPTWSRTVKPLYDALVVQCH).

The protein belongs to the phage antitermination Q type 2 family. In terms of assembly, interacts with host RPOB (via flap domain); this interaction renders host RNAP resistant to transcription pausing and allows it to read through termination signals. Interacts with host RNA polymerase sigma factor RPOD (via domain-4). Interacts with host NusA (via N-terminus and AR2 domain); this interaction releases the autoinhibition of NusA.

In terms of biological role, mediates the switch from middle to viral late gene expression by associating with host RNA polymerase (RNAP) so that the latter can read without pausing and through transcription terminators preceding late genes. Competes with host factor sigma 70 for binding to RPOB, the beta-subunit of host RNAP. To join the elongation complex, binds a specific DNA Q-binding element (QBE) and interacts with RNAP that is paused during early elongation. Participates in the lysis-lysogeny decision by activating the expression of the late lytic genes. The chain is Antitermination protein Q (23) from Salmonella typhimurium.